Reading from the N-terminus, the 276-residue chain is Monoglyceride lipase homolog (276 aa).

The protein belongs to the orthopoxvirus OPG043 family.

The polypeptide is Monoglyceride lipase homolog (OPG043) (Cynomys gunnisoni (Gunnison's prairie dog)).